The chain runs to 341 residues: Anthranilate phosphoribosyltransferase (341 aa).

Residues G84, 94-97, 112-120, and S124 contribute to the 5-phospho-alpha-D-ribose 1-diphosphate site; these read NVST and KHGGRAASS. G84 contacts anthranilate. S96 provides a ligand contact to Mg(2+). An anthranilate-binding site is contributed by R170. The Mg(2+) site is built by D229 and E230.

It belongs to the anthranilate phosphoribosyltransferase family. As to quaternary structure, homodimer. Mg(2+) is required as a cofactor.

It carries out the reaction N-(5-phospho-beta-D-ribosyl)anthranilate + diphosphate = 5-phospho-alpha-D-ribose 1-diphosphate + anthranilate. It participates in amino-acid biosynthesis; L-tryptophan biosynthesis; L-tryptophan from chorismate: step 2/5. Its function is as follows. Catalyzes the transfer of the phosphoribosyl group of 5-phosphorylribose-1-pyrophosphate (PRPP) to anthranilate to yield N-(5'-phosphoribosyl)-anthranilate (PRA). This Methylobacillus flagellatus (strain ATCC 51484 / DSM 6875 / VKM B-1610 / KT) protein is Anthranilate phosphoribosyltransferase.